A 787-amino-acid polypeptide reads, in one-letter code: Phenylalanine--tRNA ligase beta subunit (787 aa).

A tRNA-binding domain is found at 39-149 (APAFAGVVIA…EDAPVGTNIR (111 aa)). One can recognise a B5 domain in the interval 400 to 475 (PEVKQVGLRL…RVYGYENIPD (76 aa)). Mg(2+)-binding residues include aspartate 453, aspartate 459, glutamate 462, and glutamate 463. The 93-residue stretch at 694 to 786 (SKFQPVRRDL…AATAAGARLR (93 aa)) folds into the FDX-ACB domain.

Belongs to the phenylalanyl-tRNA synthetase beta subunit family. Type 1 subfamily. As to quaternary structure, tetramer of two alpha and two beta subunits. Mg(2+) serves as cofactor.

It localises to the cytoplasm. It carries out the reaction tRNA(Phe) + L-phenylalanine + ATP = L-phenylalanyl-tRNA(Phe) + AMP + diphosphate + H(+). The sequence is that of Phenylalanine--tRNA ligase beta subunit (pheT) from Neisseria meningitidis serogroup A / serotype 4A (strain DSM 15465 / Z2491).